We begin with the raw amino-acid sequence, 501 residues long: Mitochondrial inner membrane i-AAA protease supercomplex subunit MGR3 (501 aa).

Residues 1 to 77 (MLLQGMRLSQ…PKPNLKKKNR (77 aa)) are Mitochondrial matrix-facing. A disordered region spans residues 39–72 (RPPASNFNTQESAPIPESPANSPTRPQMAPKPNL). Residues 78-95 (SLMYSIIGVSIVGLYFWF) traverse the membrane as a helical segment. Residues 96-501 (KSNSRKQKLP…LKAAKKEGLN (406 aa)) lie on the Mitochondrial intermembrane side of the membrane. 4 TPR repeats span residues 109 to 144 (QKVW…CDRS), 154 to 187 (TRIE…FFEA), 386 to 420 (GTYI…AKRN), and 440 to 473 (ALST…AKET).

The protein belongs to the MGR3 family. As to quaternary structure, component of the mitochondrial inner membrane i-AAA protease supercomplex composed of MGR1, MGR3 and YME1. With MGR1, forms a subcomplex that binds to YME1 and to substrates to facilitate proteolysis.

It is found in the mitochondrion inner membrane. Functionally, component of the mitochondrial inner membrane i-AAA protease supercomplex, which degrades misfolded mitochondrial proteins. Together with MGR1, functions in an adapter complex that targets substrates to the i-AAA protease for degradation. Required for growth of cells lacking the mitochondrial genome. This Saccharomyces cerevisiae (strain ATCC 204508 / S288c) (Baker's yeast) protein is Mitochondrial inner membrane i-AAA protease supercomplex subunit MGR3 (MGR3).